A 432-amino-acid chain; its full sequence is Tol-Pal system protein TolB (432 aa).

The signal sequence occupies residues 1–24 (MKLVTRMWSILIVFFLAVLQPAQA).

Belongs to the TolB family. In terms of assembly, the Tol-Pal system is composed of five core proteins: the inner membrane proteins TolA, TolQ and TolR, the periplasmic protein TolB and the outer membrane protein Pal. They form a network linking the inner and outer membranes and the peptidoglycan layer.

The protein localises to the periplasm. Its function is as follows. Part of the Tol-Pal system, which plays a role in outer membrane invagination during cell division and is important for maintaining outer membrane integrity. The protein is Tol-Pal system protein TolB of Pasteurella multocida (strain Pm70).